A 340-amino-acid chain; its full sequence is Guanine nucleotide-binding protein G(I)/G(S)/G(T) subunit beta-3 (340 aa).

7 WD repeats span residues 53–83, 95–125, 141–170, 182–212, 224–254, 268–298, and 310–340; these read GHLA…IVWD, LRSS…SIYS, AHTG…ALWD, GHTG…KLWD, GHES…RLFD, SIIC…NIWD, and GHDN…KVWN.

It belongs to the WD repeat G protein beta family. G proteins are composed of 3 units, alpha, beta and gamma. Interacts with RASD2.

The protein resides in the cytoplasm. The protein localises to the perinuclear region. In terms of biological role, guanine nucleotide-binding proteins (G proteins) are involved as a modulator or transducer in various transmembrane signaling systems. The beta and gamma chains are required for the GTPase activity, for replacement of GDP by GTP, and for G protein-effector interaction. The protein is Guanine nucleotide-binding protein G(I)/G(S)/G(T) subunit beta-3 (GNB3) of Canis lupus familiaris (Dog).